The sequence spans 151 residues: MAQQMPSPEEIAAQLQMIRDQIAELQGVLAQLELRLRSVQAAKETVEKAAGQDGETLFPGDPELNTILKARLLEPGKAIVHLGLNVYAKLDTAKATEILAKKEDALKRSLETLKQELDKLSRTHDQYLQLLQALTAGQAAQQAGQQQKQGS.

Belongs to the prefoldin subunit alpha family. Heterohexamer of two alpha and four beta subunits.

It is found in the cytoplasm. Molecular chaperone capable of stabilizing a range of proteins. Seems to fulfill an ATP-independent, HSP70-like function in archaeal de novo protein folding. This chain is Prefoldin subunit alpha (pfdA), found in Aeropyrum pernix (strain ATCC 700893 / DSM 11879 / JCM 9820 / NBRC 100138 / K1).